We begin with the raw amino-acid sequence, 292 residues long: 2-(5''-triphosphoribosyl)-3'-dephosphocoenzyme-A synthase (292 aa).

Belongs to the CitG/MdcB family.

The enzyme catalyses 3'-dephospho-CoA + ATP = 2'-(5''-triphospho-alpha-D-ribosyl)-3'-dephospho-CoA + adenine. Functionally, catalyzes the formation of 2-(5''-triphosphoribosyl)-3'-dephosphocoenzyme-A, the precursor of the prosthetic group of the holo-acyl carrier protein (gamma chain) of citrate lyase, from ATP and dephospho-CoA. This chain is 2-(5''-triphosphoribosyl)-3'-dephosphocoenzyme-A synthase, found in Escherichia coli O139:H28 (strain E24377A / ETEC).